The following is a 118-amino-acid chain: Large ribosomal subunit protein bL20 (118 aa).

It belongs to the bacterial ribosomal protein bL20 family.

Binds directly to 23S ribosomal RNA and is necessary for the in vitro assembly process of the 50S ribosomal subunit. It is not involved in the protein synthesizing functions of that subunit. This is Large ribosomal subunit protein bL20 from Sulfurovum sp. (strain NBC37-1).